We begin with the raw amino-acid sequence, 89 residues long: Cell division topological specificity factor (89 aa).

Belongs to the MinE family.

In terms of biological role, prevents the cell division inhibition by proteins MinC and MinD at internal division sites while permitting inhibition at polar sites. This ensures cell division at the proper site by restricting the formation of a division septum at the midpoint of the long axis of the cell. The sequence is that of Cell division topological specificity factor from Pectobacterium carotovorum subsp. carotovorum (strain PC1).